Reading from the N-terminus, the 1579-residue chain is Pentafunctional AROM polypeptide (1579 aa).

A 3-dehydroquinate synthase region spans residues 1-383 (MLVKVPILGR…YGKSAHVVSD (383 aa)). NAD(+) contacts are provided by residues 40-42 (DSN), 75-78 (EANK), 106-108 (GGI), and D111. R122 serves as a coordination point for 7-phospho-2-dehydro-3-deoxy-D-arabino-heptonate. 131-132 (TS) provides a ligand contact to NAD(+). 7-phospho-2-dehydro-3-deoxy-D-arabino-heptonate-binding residues include D138 and K144. An NAD(+)-binding site is contributed by K153. N154 contributes to the 7-phospho-2-dehydro-3-deoxy-D-arabino-heptonate binding site. Residues 171 to 174 (WLQS) and N182 contribute to the NAD(+) site. E186 contributes to the Zn(2+) binding site. Residues 186-189 (EVIK) and K249 each bind 7-phospho-2-dehydro-3-deoxy-D-arabino-heptonate. E259 (proton acceptor; for 3-dehydroquinate synthase activity) is an active-site residue. 7-phospho-2-dehydro-3-deoxy-D-arabino-heptonate-binding positions include 263 to 267 (RNLLN) and H270. H270 lines the Zn(2+) pocket. H274 functions as the Proton acceptor; for 3-dehydroquinate synthase activity in the catalytic mechanism. 2 residues coordinate 7-phospho-2-dehydro-3-deoxy-D-arabino-heptonate: H286 and K355. H286 serves as a coordination point for Zn(2+). The segment at 396–862 (VYPFNNIPRD…WDVLHTELGA (467 aa)) is EPSP synthase. The active-site For EPSP synthase activity is the C844. The segment at 881 to 1071 (SVVIIGMRAA…IPTRRSAFVC (191 aa)) is shikimate kinase. ATP is bound at residue 886–893 (GMRAAGKT). A 3-dehydroquinase region spans residues 1072 to 1284 (LTFENLTEYT…AAPGQLTVAE (213 aa)). Residue H1189 is the Proton acceptor; for 3-dehydroquinate dehydratase activity of the active site. K1218 serves as the catalytic Schiff-base intermediate with substrate; for 3-dehydroquinate dehydratase activity. Positions 1297–1579 (KKDFFVVGSP…KAIYDAVTEI (283 aa)) are shikimate dehydrogenase.

It in the N-terminal section; belongs to the sugar phosphate cyclases superfamily. Dehydroquinate synthase family. In the 2nd section; belongs to the EPSP synthase family. The protein in the 3rd section; belongs to the shikimate kinase family. This sequence in the 4th section; belongs to the type-I 3-dehydroquinase family. It in the C-terminal section; belongs to the shikimate dehydrogenase family. As to quaternary structure, homodimer. The cofactor is Zn(2+).

The protein localises to the cytoplasm. It carries out the reaction 7-phospho-2-dehydro-3-deoxy-D-arabino-heptonate = 3-dehydroquinate + phosphate. The catalysed reaction is 3-dehydroquinate = 3-dehydroshikimate + H2O. The enzyme catalyses shikimate + NADP(+) = 3-dehydroshikimate + NADPH + H(+). It catalyses the reaction shikimate + ATP = 3-phosphoshikimate + ADP + H(+). It carries out the reaction 3-phosphoshikimate + phosphoenolpyruvate = 5-O-(1-carboxyvinyl)-3-phosphoshikimate + phosphate. The protein operates within metabolic intermediate biosynthesis; chorismate biosynthesis; chorismate from D-erythrose 4-phosphate and phosphoenolpyruvate: step 2/7. It functions in the pathway metabolic intermediate biosynthesis; chorismate biosynthesis; chorismate from D-erythrose 4-phosphate and phosphoenolpyruvate: step 3/7. It participates in metabolic intermediate biosynthesis; chorismate biosynthesis; chorismate from D-erythrose 4-phosphate and phosphoenolpyruvate: step 4/7. Its pathway is metabolic intermediate biosynthesis; chorismate biosynthesis; chorismate from D-erythrose 4-phosphate and phosphoenolpyruvate: step 5/7. The protein operates within metabolic intermediate biosynthesis; chorismate biosynthesis; chorismate from D-erythrose 4-phosphate and phosphoenolpyruvate: step 6/7. In terms of biological role, the AROM polypeptide catalyzes 5 consecutive enzymatic reactions in prechorismate polyaromatic amino acid biosynthesis. The protein is Pentafunctional AROM polypeptide of Candida glabrata (strain ATCC 2001 / BCRC 20586 / JCM 3761 / NBRC 0622 / NRRL Y-65 / CBS 138) (Yeast).